Reading from the N-terminus, the 870-residue chain is Breast cancer anti-estrogen resistance protein 1 (870 aa).

N-acetylmethionine is present on Met1. Residues 3–65 (HLNVLAKALY…PGNRLKILVG (63 aa)) enclose the SH3 domain. The tract at residues 70–156 (KPAGPGPGPP…TFSKQTPHHP (87 aa)) is disordered. Over residues 73–85 (GPGPGPPATPAQP) the composition is skewed to pro residues. Residues 97–111 (SQYTPMLPNTYQPQP) show a composition bias toward polar residues. Residues 115–416 (YLVPTPSKAQ…SGVYAVPPPA (302 aa)) are substrate for kinases. Tyr128 carries the post-translational modification Phosphotyrosine; by SRC. Phosphoserine is present on residues Ser134 and Ser139. A compositionally biased stretch (polar residues) spans 135-151 (PQFQSPPAKQTSTFSKQ). The residue at position 234 (Tyr234) is a Phosphotyrosine. Tyr249 bears the Phosphotyrosine; by ABL1 mark. Residue Thr269 is modified to Phosphothreonine. Ser292 carries the phosphoserine modification. 3 positions are modified to phosphotyrosine: Tyr362, Tyr372, and Tyr410. Disordered stretches follow at residues 411 to 449 (AVPP…VAGP), 609 to 658 (KATA…NSEG), and 715 to 734 (IDHD…GRTG). Over residues 416-426 (AEREAPAEGKR) the composition is skewed to basic and acidic residues. A compositionally biased stretch (low complexity) spans 427–444 (LSASSTGSTRSSQSASSL). Phosphoserine occurs at positions 428, 437, and 639. Residues 626–655 (TDKTSSIQSRPLPSPPKFTSQDSPDGQYEN) show a composition bias toward polar residues. Positions 635–643 (RPLPSPPKF) match the SH3-binding motif. A divergent helix-loop-helix motif region spans residues 746–796 (FYLEQCEANLTTLTNAVDAFFTAVATNQPPKIFVAHSKFVILSAHKLVFIG).

Belongs to the CAS family. Forms complexes in vivo with PTK2/FAK1, adapter protein CRKL and LYN kinase. Heterodimerizes with NEDD9. Component of a complex comprised of SH2D3C, BCAR1/CAS, and CRK. Within the complex, interacts with SH2D3C (via C-terminus), and CRK. Part of a complex comprised of PTPRA, BCAR1, BCAR3 (via SH2 domain) and SRC; the formation of the complex is dependent on integrin mediated-tyrosine phosphorylation of PTPRA. Interacts with BCAR3 (via Ras-GEF domain); the interaction regulates adhesion-dependent serine phosphorylation. Interacts with SMAD2 and SMAD3. Interacts with NPHP1. Interacts with PTK2B/PYK2. Interacts (via C-terminus) with SH2D3C/CHAT isoform 2 (via C-terminus). Interacts with activated CSPG4. Interacts with BMX, INPPL1/SHIP2 and PEAK1. Part of a collagen-stimulated complex involved in cell migration made of CDC42, CRK, TNK2 and BCAR1/p130cas. Interacts with TNK2 via SH3 domains. Interacts (when tyrosine-phosphorylated) with tensin TNS1; the interaction is increased by phosphorylation of TNS1. PTK2/FAK1 activation mediates phosphorylation at the YDYVHL motif; phosphorylation is most likely catalyzed by SRC family members. SRC-family kinases are recruited to the phosphorylated sites and can phosphorylate other tyrosine residues. Tyrosine phosphorylation is triggered by integrin-mediated adhesion of cells to the extracellular matrix. In terms of processing, dephosphorylated by PTPN14 at Tyr-128. Post-translationally, phosphorylated by SRC kinase in a EDN1- and PTK2B-mediated manner; phosphorylation strengthens its interaction with BCAR3 as part of the PTK2B/BCAR1/BCAR3/RAP1 signaling pathway. In terms of tissue distribution, expressed in B-cells (at protein level). Widely expressed with an abundant expression in the testis. Low level of expression seen in the liver, thymus, and peripheral blood leukocytes.

Its subcellular location is the cell junction. It is found in the focal adhesion. It localises to the cytoplasm. The protein resides in the cell projection. The protein localises to the axon. Functionally, docking protein which plays a central coordinating role for tyrosine kinase-based signaling related to cell adhesion. Implicated in induction of cell migration and cell branching. Involved in the BCAR3-mediated inhibition of TGFB signaling. The sequence is that of Breast cancer anti-estrogen resistance protein 1 (BCAR1) from Homo sapiens (Human).